Consider the following 542-residue polypeptide: CTP synthase (542 aa).

The amidoligase domain stretch occupies residues 1–265; that stretch reads MARYVFITGG…DNEVLAAFGI (265 aa). Serine 13 provides a ligand contact to CTP. Serine 13 serves as a coordination point for UTP. ATP contacts are provided by residues 14 to 19 and aspartate 71; that span reads SLGKGI. Residues aspartate 71 and glutamate 139 each coordinate Mg(2+). Residues 146-148, 186-191, and lysine 222 contribute to the CTP site; these read DIE and KTKPTQ. Residues 186–191 and lysine 222 each bind UTP; that span reads KTKPTQ. A Glutamine amidotransferase type-1 domain is found at 291–541; the sequence is TIAIVGKYTG…IEAALEQSRL (251 aa). Glycine 353 is a binding site for L-glutamine. Cysteine 380 serves as the catalytic Nucleophile; for glutamine hydrolysis. Residues 381–384, glutamate 404, and arginine 469 contribute to the L-glutamine site; that span reads FGMQ. Active-site residues include histidine 514 and glutamate 516.

The protein belongs to the CTP synthase family. Homotetramer.

It carries out the reaction UTP + L-glutamine + ATP + H2O = CTP + L-glutamate + ADP + phosphate + 2 H(+). The catalysed reaction is L-glutamine + H2O = L-glutamate + NH4(+). It catalyses the reaction UTP + NH4(+) + ATP = CTP + ADP + phosphate + 2 H(+). The protein operates within pyrimidine metabolism; CTP biosynthesis via de novo pathway; CTP from UDP: step 2/2. Its activity is regulated as follows. Allosterically activated by GTP, when glutamine is the substrate; GTP has no effect on the reaction when ammonia is the substrate. The allosteric effector GTP functions by stabilizing the protein conformation that binds the tetrahedral intermediate(s) formed during glutamine hydrolysis. Inhibited by the product CTP, via allosteric rather than competitive inhibition. In terms of biological role, catalyzes the ATP-dependent amination of UTP to CTP with either L-glutamine or ammonia as the source of nitrogen. Regulates intracellular CTP levels through interactions with the four ribonucleotide triphosphates. The protein is CTP synthase of Rhizobium meliloti (strain 1021) (Ensifer meliloti).